The following is a 636-amino-acid chain: DNA ligase (636 aa).

Residue Lys-113 is the N6-AMP-lysine intermediate of the active site. In terms of domain architecture, BRCT spans 560-636 (NSEGIFQNQT…KSSFSKKFEK (77 aa)).

The protein belongs to the NAD-dependent DNA ligase family.

It catalyses the reaction NAD(+) + (deoxyribonucleotide)n-3'-hydroxyl + 5'-phospho-(deoxyribonucleotide)m = (deoxyribonucleotide)n+m + AMP + beta-nicotinamide D-nucleotide.. Its function is as follows. Catalyzes the formation of phosphodiester linkages between 5'-phosphoryl and 3'-hydroxyl groups in double-stranded DNA using NAD as a coenzyme and as the energy source for the reaction. The polypeptide is DNA ligase (Acanthamoeba polyphaga (Amoeba)).